The following is a 177-amino-acid chain: ATP synthase subunit delta (177 aa).

Belongs to the ATPase delta chain family. In terms of assembly, F-type ATPases have 2 components, F(1) - the catalytic core - and F(0) - the membrane proton channel. F(1) has five subunits: alpha(3), beta(3), gamma(1), delta(1), epsilon(1). F(0) has three main subunits: a(1), b(2) and c(10-14). The alpha and beta chains form an alternating ring which encloses part of the gamma chain. F(1) is attached to F(0) by a central stalk formed by the gamma and epsilon chains, while a peripheral stalk is formed by the delta and b chains.

The protein resides in the cell inner membrane. In terms of biological role, f(1)F(0) ATP synthase produces ATP from ADP in the presence of a proton or sodium gradient. F-type ATPases consist of two structural domains, F(1) containing the extramembraneous catalytic core and F(0) containing the membrane proton channel, linked together by a central stalk and a peripheral stalk. During catalysis, ATP synthesis in the catalytic domain of F(1) is coupled via a rotary mechanism of the central stalk subunits to proton translocation. Functionally, this protein is part of the stalk that links CF(0) to CF(1). It either transmits conformational changes from CF(0) to CF(1) or is implicated in proton conduction. In Azobacteroides pseudotrichonymphae genomovar. CFP2, this protein is ATP synthase subunit delta.